A 293-amino-acid chain; its full sequence is MNPFWSMSTSSVRKRSEGEEKTLTGDVKTSPPRTAPKKQLPSIPKNALPITKPTSPAPAAQSTNGTHASYGPFYLEYSLLAEFTLVVKQKLPGVYVQPSYRSALMWFGVIFIRHGLYQDGVFKFTVYIPDNYPDGDCPRLVFDIPVFHPLVDPTSGELDVKRAFAKWRRNHNHIWQVLMYARRVFYKIDTASPLNPEAAVLYEKDIQLFKSKVVDSVQVCTARLFDQPKIEDPYAISFSPWNPSVHDEAREKMLTQKKKPEEQHNKSVHVAGLSWVKPGSVQPFSKEEKTVAT.

Residues 1-11 (MNPFWSMSTSS) are compositionally biased toward polar residues. Residues 1–63 (MNPFWSMSTS…TSPAPAAQST (63 aa)) form a disordered region. A compositionally biased stretch (basic and acidic residues) spans 14–23 (KRSEGEEKTL). Serine 30 carries the post-translational modification Phosphoserine. Positions 74–222 (YLEYSLLAEF…VVDSVQVCTA (149 aa)) constitute a UBC core domain. The span at 253-265 (MLTQKKKPEEQHN) shows a compositional bias: basic and acidic residues. The segment at 253-293 (MLTQKKKPEEQHNKSVHVAGLSWVKPGSVQPFSKEEKTVAT) is disordered.

This sequence belongs to the ubiquitin-conjugating enzyme family. FTS subfamily. In terms of assembly, component of the FTS/Hook/FHIP complex (FHF complex), composed of AKTIP/FTS, FHIP1B, and one or more members of the Hook family of proteins HOOK1, HOOK2, and HOOK3. Interacts directly with HOOK1, HOOK2 and HOOK3. The FHF complex associates with the homotypic vesicular sorting complex (the HOPS complex). Also interacts with AKT1. May interact with FHIP1A.

It localises to the cytoplasm. It is found in the cell membrane. Functionally, component of the FTS/Hook/FHIP complex (FHF complex). The FHF complex may function to promote vesicle trafficking and/or fusion via the homotypic vesicular protein sorting complex (the HOPS complex). Regulates apoptosis by enhancing phosphorylation and activation of AKT1. Increases release of TNFSF6 via the AKT1/GSK3B/NFATC1 signaling cascade. FHF complex promotes the distribution of AP-4 complex to the perinuclear area of the cell. The sequence is that of AKT-interacting protein (AKTIP) from Pongo abelii (Sumatran orangutan).